Consider the following 103-residue polypeptide: Histone H4 (103 aa).

Position 6 is an N6-acetyl-N6-methyllysine; alternate (Lys-6). Lys-6, Lys-9, and Lys-13 each carry N6-methyllysine; alternate. Lys-13 carries the post-translational modification N6-acetyl-N6-methyllysine; alternate. The DNA-binding element occupies 17-21; the sequence is KRHRK. Lys-92 carries the post-translational modification N6-glutaryllysine.

This sequence belongs to the histone H4 family. As to quaternary structure, the nucleosome is a histone octamer containing two molecules each of H2A, H2B, H3 and H4 assembled in one H3-H4 heterotetramer and two H2A-H2B heterodimers. The octamer wraps approximately 147 bp of DNA. In terms of processing, glutarylation at Lys-92 (H4K91glu) destabilizes nucleosomes by promoting dissociation of the H2A-H2B dimers from nucleosomes.

The protein resides in the nucleus. The protein localises to the chromosome. Core component of nucleosome. Nucleosomes wrap and compact DNA into chromatin, limiting DNA accessibility to the cellular machineries which require DNA as a template. Histones thereby play a central role in transcription regulation, DNA repair, DNA replication and chromosomal stability. DNA accessibility is regulated via a complex set of post-translational modifications of histones, also called histone code, and nucleosome remodeling. This is Histone H4 (H4.1) from Mortierella alpina (Oleaginous fungus).